A 247-amino-acid polypeptide reads, in one-letter code: uncharacterized protein (247 aa).

Leucine 11, asparagine 85, and lysine 119 together coordinate NADP(+). Serine 136 (proton donor) is an active-site residue. The NADP(+) site is built by tyrosine 150, lysine 154, valine 181, and threonine 183. Tyrosine 150 (proton acceptor) is an active-site residue. Lysine 154 acts as the Lowers pKa of active site Tyr in catalysis.

It belongs to the short-chain dehydrogenases/reductases (SDR) family.

This is an uncharacterized protein from Schizosaccharomyces pombe (strain 972 / ATCC 24843) (Fission yeast).